Reading from the N-terminus, the 394-residue chain is Protein TsgA homolog (394 aa).

Transmembrane regions (helical) follow at residues 11–31 (WISF…GMVL), 51–71 (FLNA…EIVP), 76–96 (LIFG…SHSL), 101–121 (LCMF…TFLI), 135–155 (LFTD…AAAI), 163–183 (YWVY…ALCF), 205–225 (LGVA…LGFI), 245–265 (SVVG…SAIL), 273–293 (IVTA…NTTD), 299–319 (WIIM…ITLG), 333–353 (FILT…GPIV), and 362–382 (LATT…LGFV).

Belongs to the major facilitator superfamily. TsgA family.

The protein localises to the cell inner membrane. The chain is Protein TsgA homolog from Erwinia tasmaniensis (strain DSM 17950 / CFBP 7177 / CIP 109463 / NCPPB 4357 / Et1/99).